Here is a 647-residue protein sequence, read N- to C-terminus: Threonine--tRNA ligase (647 aa).

The 61-residue stretch at 1–61 (MIKITFPDGA…EEDGSIEIVT (61 aa)) folds into the TGS domain. The tract at residues 240–538 (DHRKLGKELD…LIETYKGAFP (299 aa)) is catalytic. Zn(2+)-binding residues include Cys334, His385, and His515.

Belongs to the class-II aminoacyl-tRNA synthetase family. Homodimer. Requires Zn(2+) as cofactor.

The protein resides in the cytoplasm. The enzyme catalyses tRNA(Thr) + L-threonine + ATP = L-threonyl-tRNA(Thr) + AMP + diphosphate + H(+). In terms of biological role, catalyzes the attachment of threonine to tRNA(Thr) in a two-step reaction: L-threonine is first activated by ATP to form Thr-AMP and then transferred to the acceptor end of tRNA(Thr). Also edits incorrectly charged L-seryl-tRNA(Thr). The polypeptide is Threonine--tRNA ligase (Streptococcus pyogenes serotype M3 (strain ATCC BAA-595 / MGAS315)).